The following is a 546-amino-acid chain: Carotenoid 9,10(9',10')-cleavage dioxygenase (546 aa).

Residues His-226, His-274, His-340, and His-530 each coordinate Fe cation.

The protein belongs to the carotenoid oxygenase family. Fe(2+) serves as cofactor. In terms of tissue distribution, in vegetative and floral tissues.

The protein localises to the cytoplasm. The catalysed reaction is all-trans-zeaxanthin + 2 O2 = 4,9-dimethyldodeca-2,4,6,8,10-pentaenedial + 2 (3R)-hydroxy-beta-ionone. Functionally, cleaves a variety of carotenoids symmetrically at both the 9-10 and 9'-10' double bonds. Catalyzes the formation of 4,9-dimethyldodeca-2,4,6,8,10-pentaene-1,12-dialdehyde and probably hydroxydihydro-beta-ionone from zeaxanthin. In Crocus sativus (Saffron), this protein is Carotenoid 9,10(9',10')-cleavage dioxygenase (CCD).